Reading from the N-terminus, the 119-residue chain is Small ribosomal subunit protein uS13 (119 aa).

Residues 92-119 (RRGLPVRGQQTQTNARTRKGPRRGPASR) form a disordered region.

Belongs to the universal ribosomal protein uS13 family. In terms of assembly, part of the 30S ribosomal subunit. Forms a loose heterodimer with protein S19. Forms two bridges to the 50S subunit in the 70S ribosome.

In terms of biological role, located at the top of the head of the 30S subunit, it contacts several helices of the 16S rRNA. In the 70S ribosome it contacts the 23S rRNA (bridge B1a) and protein L5 of the 50S subunit (bridge B1b), connecting the 2 subunits; these bridges are implicated in subunit movement. Contacts the tRNAs in the A and P-sites. This Halorhodospira halophila (strain DSM 244 / SL1) (Ectothiorhodospira halophila (strain DSM 244 / SL1)) protein is Small ribosomal subunit protein uS13.